The primary structure comprises 1232 residues: Histone-lysine N-methyltransferase MECOM (1232 aa).

The disordered stretch occupies residues 22 to 68 (PEIPLEEMPDADADGITSVPSLHIQEPCSPATSSESFTPKEGSPYKA). Positions 25–34 (PLEEMPDADA) are enriched in acidic residues. Residues 80–192 (DEFELRESTM…PGEELLLFMK (113 aa)) enclose the SET domain. Residues Lys-101 and Lys-192 each participate in a glycyl lysine isopeptide (Lys-Gly) (interchain with G-Cter in SUMO2) cross-link. Residues 191–442 (MKSEEDPHEP…NHFAAGGFFG (252 aa)) are interaction with SUV39H1 and probably MAPK9 and SMAD3. 5 C2H2-type zinc fingers span residues 211–238 (HRCE…STPH), 265–287 (QDCK…MLSH), 293–315 (YKCD…QMSH), 321–344 (YECE…RSQH), and 350–372 (HACP…KHIH). A Glycyl lysine isopeptide (Lys-Gly) (interchain with G-Cter in SUMO2) cross-link involves residue Lys-294. Glycyl lysine isopeptide (Lys-Gly) (interchain with G-Cter in SUMO2) cross-links involve residues Lys-369 and Lys-376. A C2H2-type 6 zinc finger spans residues 378 to 400 (FICEVCHKSYTQFSNLCRHKRMH). The C2H2-type 7; atypical zinc-finger motif lies at 407–429 (IKCKDCGQMFSTTSSLNKHRRFC). Residues Lys-432, Lys-525, Lys-545, Lys-549, and Lys-557 each participate in a glycyl lysine isopeptide (Lys-Gly) (interchain with G-Cter in SUMO2) cross-link. A disordered region spans residues 548 to 622 (SKHPPVGDNK…KCKENGKMFK (75 aa)). A compositionally biased stretch (basic and acidic residues) spans 562 to 577 (LPERSSEERPLEKISD). Over residues 588–600 (STPSGSDLETTSG) the composition is skewed to polar residues. A compositionally biased stretch (basic and acidic residues) spans 608–622 (ESDKEKCKENGKMFK). Positions 611 to 624 (KEKCKENGKMFKDK) match the Nuclear localization signal motif. Lys-624 participates in a covalent cross-link: Glycyl lysine isopeptide (Lys-Gly) (interchain with G-Cter in SUMO2). Phosphoserine is present on Ser-626. Glycyl lysine isopeptide (Lys-Gly) (interchain with G-Cter in SUMO2) cross-links involve residues Lys-637, Lys-665, Lys-687, and Lys-723. The segment at 720–823 (LPLKMEPQSP…DGSLQHARPT (104 aa)) is disordered. The residue at position 728 (Ser-728) is a Phosphoserine. Residues Lys-733, Lys-734, and Lys-737 each participate in a glycyl lysine isopeptide (Lys-Gly) (interchain with G-Cter in SUMO2) cross-link. The residue at position 742 (Ser-742) is a Phosphoserine. The CTBP-binding motif 1 signature appears at 743 to 747 (PFDLT). Glycyl lysine isopeptide (Lys-Gly) (interchain with G-Cter in SUMO2) cross-links involve residues Lys-751, Lys-754, and Lys-762. Residues 758-773 (SGPSKPSGTPATSQDQ) show a composition bias toward polar residues. The short motif at 774-778 (PLDLS) is the CTBP-binding motif 2 element. Residues Lys-789, Lys-802, and Lys-803 each participate in a glycyl lysine isopeptide (Lys-Gly) (interchain with G-Cter in SUMO2) cross-link. Positions 791–805 (TEPRKNHVFGEKKGS) are enriched in basic and acidic residues. The segment covering 806–816 (NMDTRPSSDGS) has biased composition (polar residues). Glycyl lysine isopeptide (Lys-Gly) (interchain with G-Cter in SUMO2) cross-links involve residues Lys-837, Lys-846, Lys-848, and Lys-879. C2H2-type zinc fingers lie at residues 914-936 (YTCR…LRTH), 942-965 (YRCK…RNIH), and 971-993 (FKCH…LKKH). Lys-1020 participates in a covalent cross-link: Glycyl lysine isopeptide (Lys-Gly) (interchain with G-Cter in SUMO2). The segment covering 1032 to 1043 (IGNSNHGSQSPR) has biased composition (polar residues). A disordered region spans residues 1032–1107 (IGNSNHGSQS…GVTRLDEEIP (76 aa)). Residues Ser-1039 and Ser-1041 each carry the phosphoserine modification. Residues 1044–1059 (NMEERMNGSHFKDKKA) show a composition bias toward basic and acidic residues. Glycyl lysine isopeptide (Lys-Gly) (interchain with G-Cter in SUMO2) cross-links involve residues Lys-1055 and Lys-1058. The segment covering 1068-1088 (LLDDEEVEDEVLLDEEDEDND) has biased composition (acidic residues). Over residues 1089–1104 (IPGKPRKELGVTRLDE) the composition is skewed to basic and acidic residues. Residues Lys-1122, Lys-1129, Lys-1134, Lys-1151, Lys-1178, and Lys-1186 each participate in a glycyl lysine isopeptide (Lys-Gly) (interchain with G-Cter in SUMO2) cross-link.

In terms of assembly, homooligomer. Interacts with CTBP1. Interacts with SMAD3 (via MH2 domain); the interaction is direct. Interacts with SMAD4; through interaction with SMAD3. Interacts with CREBBP, KAT2B and histone deacetylases. Interacts with MAPK8 and MAPK9; inhibits JNK signaling. Interacts with SUV39H1 (via SET domain); enhances MECOM transcriptional repression activity. Post-translationally, may be acetylated by CREBBP and KAT2B.

The protein resides in the nucleus. It is found in the nucleus speckle. The protein localises to the cytoplasm. It carries out the reaction L-lysyl(9)-[histone H3] + S-adenosyl-L-methionine = N(6)-methyl-L-lysyl(9)-[histone H3] + S-adenosyl-L-homocysteine + H(+). Functions as a transcriptional regulator binding to DNA sequences in the promoter region of target genes and regulating positively or negatively their expression. Oncogene which plays a role in development, cell proliferation and differentiation. May also play a role in apoptosis through regulation of the JNK and TGF-beta signaling. Involved in hematopoiesis. In terms of biological role, displays histone methyltransferase activity and monomethylates 'Lys-9' of histone H3 (H3K9me1) in vitro. Probably catalyzes the monomethylation of free histone H3 in the cytoplasm which is then transported to the nucleus and incorporated into nucleosomes where SUV39H methyltransferases use it as a substrate to catalyze histone H3 'Lys-9' trimethylation. Likely to be one of the primary histone methyltransferases along with PRDM16 that direct cytoplasmic H3K9me1 methylation. The protein is Histone-lysine N-methyltransferase MECOM of Mus musculus (Mouse).